The primary structure comprises 224 residues: Steroid receptor RNA activator 1 (224 aa).

Disordered regions lie at residues M1–S90 and A201–S224. 3 positions are modified to phosphoserine: S48, S57, and S75. Positions P58 to P76 are enriched in pro residues. A compositionally biased stretch (basic and acidic residues) spans A201–H215.

Belongs to the SRA1 family. In terms of assembly, SRA1 RNA exists in a ribonucleoprotein complex containing NCOA1. The RNA also forms a complex with PUS1 and RARG in the nucleus. Interacts with AR. In terms of tissue distribution, highly expressed in liver and skeletal muscle and to a lesser extent in brain. Also expressed in both normal and tumorigenic breast epithelial cell lines. Significantly up-regulated in human tumors of the breast, ovary, and uterus.

It localises to the nucleus. Its subcellular location is the cytoplasm. Functionally, functional RNA which acts as a transcriptional coactivator that selectively enhances steroid receptor-mediated transactivation ligand-independently through a mechanism involving the modulating N-terminal domain (AF-1) of steroid receptors. Also mediates transcriptional coactivation of steroid receptors ligand-dependently through the steroid-binding domain (AF-2). Enhances cellular proliferation and differentiation and promotes apoptosis in vivo. May play a role in tumorigenesis. In Homo sapiens (Human), this protein is Steroid receptor RNA activator 1.